Consider the following 140-residue polypeptide: Nucleoside diphosphate kinase (140 aa).

Residues Lys-11, Phe-59, Arg-87, Thr-93, Arg-104, and Asn-114 each contribute to the ATP site. His-117 acts as the Pros-phosphohistidine intermediate in catalysis.

Belongs to the NDK family. In terms of assembly, homotetramer. The cofactor is Mg(2+).

It localises to the cytoplasm. It carries out the reaction a 2'-deoxyribonucleoside 5'-diphosphate + ATP = a 2'-deoxyribonucleoside 5'-triphosphate + ADP. It catalyses the reaction a ribonucleoside 5'-diphosphate + ATP = a ribonucleoside 5'-triphosphate + ADP. In terms of biological role, major role in the synthesis of nucleoside triphosphates other than ATP. The ATP gamma phosphate is transferred to the NDP beta phosphate via a ping-pong mechanism, using a phosphorylated active-site intermediate. The sequence is that of Nucleoside diphosphate kinase from Methylobacterium nodulans (strain LMG 21967 / CNCM I-2342 / ORS 2060).